Consider the following 396-residue polypeptide: Probable splicing factor YJU2B (396 aa).

A disordered region spans residues Met1–Tyr26. Position 40 is a phosphoserine (Ser40). The stretch at Leu182–Thr214 forms a coiled coil. Positions Ile295–Glu396 are disordered. Ser306 is modified (phosphoserine). The span at Lys315–Gln327 shows a compositional bias: basic and acidic residues. The segment covering Thr340–Arg350 has biased composition (polar residues). Position 362 is a phosphoserine (Ser362).

It belongs to the CWC16 family.

The protein resides in the nucleus. Functionally, may be involved in mRNA splicing. The polypeptide is Probable splicing factor YJU2B (Homo sapiens (Human)).